The chain runs to 212 residues: Ribonuclease HII (212 aa).

Residues 28–212 enclose the RNase H type-2 domain; the sequence is SIIAGVDEVG…KSFAPIRQVV (185 aa). The a divalent metal cation site is built by Asp34, Glu35, and Asp127.

The protein belongs to the RNase HII family. Mn(2+) serves as cofactor. Requires Mg(2+) as cofactor.

It is found in the cytoplasm. It carries out the reaction Endonucleolytic cleavage to 5'-phosphomonoester.. In terms of biological role, endonuclease that specifically degrades the RNA of RNA-DNA hybrids. This Chlamydia caviae (strain ATCC VR-813 / DSM 19441 / 03DC25 / GPIC) (Chlamydophila caviae) protein is Ribonuclease HII.